The chain runs to 71 residues: ATP synthase F(0) complex subunit e, mitochondrial (71 aa).

An N6-acetyllysine modification is found at Lys-34. Ser-68 carries the post-translational modification Phosphoserine.

It belongs to the ATPase e subunit family. In terms of assembly, component of the ATP synthase complex composed at least of ATP5F1A/subunit alpha, ATP5F1B/subunit beta, ATP5MC1/subunit c (homooctomer), MT-ATP6/subunit a, MT-ATP8/subunit 8, ATP5ME/subunit e, ATP5MF/subunit f, ATP5MG/subunit g, ATP5MK/subunit k, ATP5MJ/subunit j, ATP5F1C/subunit gamma, ATP5F1D/subunit delta, ATP5F1E/subunit epsilon, ATP5PF/subunit F6, ATP5PB/subunit b, ATP5PD/subunit d, ATP5PO/subunit OSCP. ATP synthase complex consists of a soluble F(1) head domain (subunits alpha(3) and beta(3)) - the catalytic core - and a membrane F(0) domain - the membrane proton channel (subunits c, a, 8, e, f, g, k and j). These two domains are linked by a central stalk (subunits gamma, delta, and epsilon) rotating inside the F1 region and a stationary peripheral stalk (subunits F6, b, d, and OSCP).

It localises to the mitochondrion. The protein localises to the mitochondrion inner membrane. In terms of biological role, subunit e, of the mitochondrial membrane ATP synthase complex (F(1)F(0) ATP synthase or Complex V) that produces ATP from ADP in the presence of a proton gradient across the membrane which is generated by electron transport complexes of the respiratory chain. ATP synthase complex consist of a soluble F(1) head domain - the catalytic core - and a membrane F(1) domain - the membrane proton channel. These two domains are linked by a central stalk rotating inside the F(1) region and a stationary peripheral stalk. During catalysis, ATP synthesis in the catalytic domain of F(1) is coupled via a rotary mechanism of the central stalk subunits to proton translocation. In vivo, can only synthesize ATP although its ATP hydrolase activity can be activated artificially in vitro. Part of the complex F(0) domain. The chain is ATP synthase F(0) complex subunit e, mitochondrial from Rattus norvegicus (Rat).